The following is a 151-amino-acid chain: MKQTTMISAKDTNKKWYIVDAENKTVGRLATQVALVLRGKHKVDFTPHINNGDHVIIINAEKAIFSGKKESNKFYYHHSMHPGGLKKRSVEVQRELDATKILERAIRLMLPKNVQGSNQYRALHVFKGSNHPFAAQKPEVLEISTKKGDVK.

The protein belongs to the universal ribosomal protein uL13 family. In terms of assembly, part of the 50S ribosomal subunit.

This protein is one of the early assembly proteins of the 50S ribosomal subunit, although it is not seen to bind rRNA by itself. It is important during the early stages of 50S assembly. This is Large ribosomal subunit protein uL13 from Mycoplasma mycoides subsp. mycoides SC (strain CCUG 32753 / NCTC 10114 / PG1).